The following is a 460-amino-acid chain: Arginine biosynthesis bifunctional protein ArgJ, chloroplastic (460 aa).

The N-terminal 26 residues, Met-1–Phe-26, are a transit peptide targeting the chloroplast. Positions 202, 228, 239, 328, 455, and 460 each coordinate substrate. Thr-239 (nucleophile) is an active-site residue.

This sequence belongs to the ArgJ family. Heterodimer of an alpha and a beta chain.

Its subcellular location is the plastid. It localises to the chloroplast. It carries out the reaction N(2)-acetyl-L-ornithine + L-glutamate = N-acetyl-L-glutamate + L-ornithine. It catalyses the reaction L-glutamate + acetyl-CoA = N-acetyl-L-glutamate + CoA + H(+). It participates in amino-acid biosynthesis; L-arginine biosynthesis; L-ornithine and N-acetyl-L-glutamate from L-glutamate and N(2)-acetyl-L-ornithine (cyclic): step 1/1. The protein operates within amino-acid biosynthesis; L-arginine biosynthesis; N(2)-acetyl-L-ornithine from L-glutamate: step 1/4. Its function is as follows. Catalyzes two activities which are involved in the cyclic version of arginine biosynthesis: the synthesis of acetylglutamate from glutamate and acetyl-CoA, and of ornithine by transacetylation between acetylornithine and glutamate. The sequence is that of Arginine biosynthesis bifunctional protein ArgJ, chloroplastic from Citrullus lanatus (Watermelon).